We begin with the raw amino-acid sequence, 473 residues long: Hexaprenyl pyrophosphate synthase, mitochondrial (473 aa).

Isopentenyl diphosphate contacts are provided by K84, R87, and H186. D193 and D197 together coordinate Mg(2+). R202 serves as a coordination point for an all-trans-polyprenyl diphosphate. R203 lines the isopentenyl diphosphate pocket. The an all-trans-polyprenyl diphosphate site is built by K323, T324, Q361, and K378.

The protein belongs to the FPP/GGPP synthase family. Mg(2+) serves as cofactor.

The protein resides in the mitochondrion inner membrane. It participates in cofactor biosynthesis; ubiquinone biosynthesis. Assembly of polyisoprenoid side chains. The polyprenyl synthase of coenzyme Q biosynthesis catalyzes the formation from isopentenyl diphosphate of all trans-polyprenyl pyrophosphates generally ranging in length of between 6 and 10 isoprene units depending on the species. This is Hexaprenyl pyrophosphate synthase, mitochondrial (COQ1) from Saccharomyces cerevisiae (strain ATCC 204508 / S288c) (Baker's yeast).